A 273-amino-acid chain; its full sequence is 4-hydroxy-tetrahydrodipicolinate reductase (273 aa).

Residues Gly-11–Met-16 and Glu-36 contribute to the NAD(+) site. Arg-37 is an NADP(+) binding site. NAD(+) is bound by residues Gly-100–Thr-102 and Ala-124–Tyr-127. His-157 serves as the catalytic Proton donor/acceptor. A (S)-2,3,4,5-tetrahydrodipicolinate-binding site is contributed by His-158. Lys-161 acts as the Proton donor in catalysis. Gly-167–Thr-168 serves as a coordination point for (S)-2,3,4,5-tetrahydrodipicolinate.

It belongs to the DapB family.

The protein localises to the cytoplasm. It catalyses the reaction (S)-2,3,4,5-tetrahydrodipicolinate + NAD(+) + H2O = (2S,4S)-4-hydroxy-2,3,4,5-tetrahydrodipicolinate + NADH + H(+). It carries out the reaction (S)-2,3,4,5-tetrahydrodipicolinate + NADP(+) + H2O = (2S,4S)-4-hydroxy-2,3,4,5-tetrahydrodipicolinate + NADPH + H(+). It participates in amino-acid biosynthesis; L-lysine biosynthesis via DAP pathway; (S)-tetrahydrodipicolinate from L-aspartate: step 4/4. Catalyzes the conversion of 4-hydroxy-tetrahydrodipicolinate (HTPA) to tetrahydrodipicolinate. The chain is 4-hydroxy-tetrahydrodipicolinate reductase from Acinetobacter baumannii (strain ACICU).